Here is an 84-residue protein sequence, read N- to C-terminus: NADH dehydrogenase [ubiquinone] 1 alpha subcomplex subunit 3 (84 aa).

An N-acetylalanine modification is found at Ala-2. A helical transmembrane segment spans residues 19-39; sequence LVVSFSVWGLAIIMPMISPYT. The tract at residues 59–84 is disordered; it reads DDGNMPDVPSHPQDPLGPSLDWLKNL.

It belongs to the complex I NDUFA3 subunit family. In terms of assembly, complex I is composed of 45 different subunits.

Its subcellular location is the mitochondrion inner membrane. Functionally, accessory subunit of the mitochondrial membrane respiratory chain NADH dehydrogenase (Complex I), that is believed not to be involved in catalysis. Complex I functions in the transfer of electrons from NADH to the respiratory chain. The immediate electron acceptor for the enzyme is believed to be ubiquinone. This chain is NADH dehydrogenase [ubiquinone] 1 alpha subcomplex subunit 3 (Ndufa3), found in Mus musculus (Mouse).